Here is a 436-residue protein sequence, read N- to C-terminus: Transcription termination factor Rho (436 aa).

The 76-residue stretch at 65 to 140 (LVFVKGVLEI…IRMESVNGLP (76 aa)) folds into the Rho RNA-BD domain. ATP contacts are provided by residues 185–190 (GKGQRG), 197–202 (KAGKTV), and Arg-228.

It belongs to the Rho family. Homohexamer. The homohexamer assembles into an open ring structure.

Facilitates transcription termination by a mechanism that involves Rho binding to the nascent RNA, activation of Rho's RNA-dependent ATPase activity, and release of the mRNA from the DNA template. This Aquifex aeolicus (strain VF5) protein is Transcription termination factor Rho.